A 316-amino-acid chain; its full sequence is 4-hydroxy-3-methylbut-2-enyl diphosphate reductase (316 aa).

Cys-12 serves as a coordination point for [4Fe-4S] cluster. Positions 41 and 74 each coordinate (2E)-4-hydroxy-3-methylbut-2-enyl diphosphate. Dimethylallyl diphosphate-binding residues include His-41 and His-74. Positions 41 and 74 each coordinate isopentenyl diphosphate. A [4Fe-4S] cluster-binding site is contributed by Cys-96. (2E)-4-hydroxy-3-methylbut-2-enyl diphosphate is bound at residue His-124. His-124 lines the dimethylallyl diphosphate pocket. Residue His-124 participates in isopentenyl diphosphate binding. Glu-126 functions as the Proton donor in the catalytic mechanism. A (2E)-4-hydroxy-3-methylbut-2-enyl diphosphate-binding site is contributed by Thr-169. Cys-199 lines the [4Fe-4S] cluster pocket. (2E)-4-hydroxy-3-methylbut-2-enyl diphosphate contacts are provided by Ser-227, Ser-228, Asn-229, and Ser-271. Ser-227, Ser-228, Asn-229, and Ser-271 together coordinate dimethylallyl diphosphate. Isopentenyl diphosphate contacts are provided by Ser-227, Ser-228, Asn-229, and Ser-271.

This sequence belongs to the IspH family. Requires [4Fe-4S] cluster as cofactor.

It catalyses the reaction isopentenyl diphosphate + 2 oxidized [2Fe-2S]-[ferredoxin] + H2O = (2E)-4-hydroxy-3-methylbut-2-enyl diphosphate + 2 reduced [2Fe-2S]-[ferredoxin] + 2 H(+). The enzyme catalyses dimethylallyl diphosphate + 2 oxidized [2Fe-2S]-[ferredoxin] + H2O = (2E)-4-hydroxy-3-methylbut-2-enyl diphosphate + 2 reduced [2Fe-2S]-[ferredoxin] + 2 H(+). The protein operates within isoprenoid biosynthesis; dimethylallyl diphosphate biosynthesis; dimethylallyl diphosphate from (2E)-4-hydroxy-3-methylbutenyl diphosphate: step 1/1. It participates in isoprenoid biosynthesis; isopentenyl diphosphate biosynthesis via DXP pathway; isopentenyl diphosphate from 1-deoxy-D-xylulose 5-phosphate: step 6/6. Functionally, catalyzes the conversion of 1-hydroxy-2-methyl-2-(E)-butenyl 4-diphosphate (HMBPP) into a mixture of isopentenyl diphosphate (IPP) and dimethylallyl diphosphate (DMAPP). Acts in the terminal step of the DOXP/MEP pathway for isoprenoid precursor biosynthesis. The sequence is that of 4-hydroxy-3-methylbut-2-enyl diphosphate reductase from Xanthomonas campestris pv. campestris (strain ATCC 33913 / DSM 3586 / NCPPB 528 / LMG 568 / P 25).